A 271-amino-acid chain; its full sequence is Bis(5'-nucleosyl)-tetraphosphatase, symmetrical (271 aa).

This sequence belongs to the Ap4A hydrolase family.

The catalysed reaction is P(1),P(4)-bis(5'-adenosyl) tetraphosphate + H2O = 2 ADP + 2 H(+). In terms of biological role, hydrolyzes diadenosine 5',5'''-P1,P4-tetraphosphate to yield ADP. The polypeptide is Bis(5'-nucleosyl)-tetraphosphatase, symmetrical (Aliivibrio fischeri (strain MJ11) (Vibrio fischeri)).